Consider the following 154-residue polypeptide: SsrA-binding protein (154 aa).

The protein belongs to the SmpB family.

The protein localises to the cytoplasm. Its function is as follows. Required for rescue of stalled ribosomes mediated by trans-translation. Binds to transfer-messenger RNA (tmRNA), required for stable association of tmRNA with ribosomes. tmRNA and SmpB together mimic tRNA shape, replacing the anticodon stem-loop with SmpB. tmRNA is encoded by the ssrA gene; the 2 termini fold to resemble tRNA(Ala) and it encodes a 'tag peptide', a short internal open reading frame. During trans-translation Ala-aminoacylated tmRNA acts like a tRNA, entering the A-site of stalled ribosomes, displacing the stalled mRNA. The ribosome then switches to translate the ORF on the tmRNA; the nascent peptide is terminated with the 'tag peptide' encoded by the tmRNA and targeted for degradation. The ribosome is freed to recommence translation, which seems to be the essential function of trans-translation. This chain is SsrA-binding protein, found in Staphylococcus aureus (strain Mu3 / ATCC 700698).